We begin with the raw amino-acid sequence, 322 residues long: Probable 2-oxoglutarate-dependent dioxygenase AOP1 (322 aa).

The Fe2OG dioxygenase domain occupies 165-271 (TYYLTRLMKY…RYSTGLFSIP (107 aa)). Residues His-195, Asp-197, and His-252 each contribute to the Fe cation site. Arg-262 is a binding site for 2-oxoglutarate.

It belongs to the iron/ascorbate-dependent oxidoreductase family. Fe(2+) serves as cofactor.

Its function is as follows. Probable 2-oxoglutarate-dependent dioxygenase that may be involved in glucosinolates biosynthesis. May play a role in the production of aliphatic glucosinolates. The sequence is that of Probable 2-oxoglutarate-dependent dioxygenase AOP1 (AOP1) from Arabidopsis thaliana (Mouse-ear cress).